Here is a 683-residue protein sequence, read N- to C-terminus: Long-chain-fatty-acid--CoA ligase 5 (683 aa).

Residues 12–32 form a helical; Signal-anchor for type III membrane protein membrane-spanning segment; it reads LPTPALICLLTFGTAIFLWLI. Residues 33-683 lie on the Cytoplasmic side of the membrane; that stretch reads NRPQPVLPLI…IKSLYESIEE (651 aa). Lysine 361 bears the N6-acetyllysine mark.

This sequence belongs to the ATP-dependent AMP-binding enzyme family. Expressed most abundantly in the small intestine, and to a much lesser extent in the lung, liver, adrenal gland, adipose tissue and kidney.

Its subcellular location is the mitochondrion. The protein localises to the endoplasmic reticulum. The protein resides in the mitochondrion outer membrane. It localises to the endoplasmic reticulum membrane. It is found in the cell membrane. The catalysed reaction is a long-chain fatty acid + ATP + CoA = a long-chain fatty acyl-CoA + AMP + diphosphate. The enzyme catalyses (5Z,8Z,11Z,14Z)-eicosatetraenoate + ATP + CoA = (5Z,8Z,11Z,14Z)-eicosatetraenoyl-CoA + AMP + diphosphate. It carries out the reaction 15-hydroxy-(5Z,8Z,11Z,13E)-eicosatetraenoate + ATP + CoA = 15-hydroxy-(5Z,8Z,11Z,13E)-eicosatetraenoyl-CoA + AMP + diphosphate. It catalyses the reaction 12-hydroxy-(5Z,8Z,10E,14Z)-eicosatetraenoate + ATP + CoA = 12-hydroxy-(5Z,8Z,10E,14Z)-eicosatetraenoyl-CoA + AMP + diphosphate. The catalysed reaction is 5-hydroxy-(6E,8Z,11Z,14Z)-eicosatetraenoate + ATP + CoA = 5-hydroxy-(6E,8Z,11Z,14Z)-eicosatetraenoyl-CoA + AMP + diphosphate. The enzyme catalyses 14,15-epoxy-(5Z,8Z,11Z)-eicosatrienoate + ATP + CoA = 14,15-epoxy-(5Z,8Z,11Z)-eicosatrienoyl-CoA + AMP + diphosphate. It carries out the reaction 11,12-epoxy-(5Z,8Z,14Z)-eicosatrienoate + ATP + CoA = 11,12-epoxy-(5Z,8Z,14Z)-eicosatrienoyl-CoA + AMP + diphosphate. It catalyses the reaction hexadecanoate + ATP + CoA = hexadecanoyl-CoA + AMP + diphosphate. The catalysed reaction is (E)-hexadec-2-enoate + ATP + CoA = (2E)-hexadecenoyl-CoA + AMP + diphosphate. The enzyme catalyses (9Z)-octadecenoate + ATP + CoA = (9Z)-octadecenoyl-CoA + AMP + diphosphate. In terms of biological role, catalyzes the conversion of long-chain fatty acids to their active form acyl-CoAs for both synthesis of cellular lipids, and degradation via beta-oxidation. ACSL5 may sensitize epithelial cells to apoptosis specifically triggered by the death ligand TRAIL at the villus tip of the crypt-villus axis of the small intestine. May have a role in the survival of glioma cells. May activate fatty acids from exogenous sources for the synthesis of triacylglycerol destined for intracellular storage. It was suggested that it may also stimulate fatty acid oxidation. Utilizes a wide range of saturated fatty acids with a preference for C16-C18 unsaturated fatty acids. This Rattus norvegicus (Rat) protein is Long-chain-fatty-acid--CoA ligase 5.